The sequence spans 215 residues: UPF0502 protein YceH (215 aa).

Lys80 carries the N6-acetyllysine modification.

This sequence belongs to the UPF0502 family.

The chain is UPF0502 protein YceH from Escherichia fergusonii (strain ATCC 35469 / DSM 13698 / CCUG 18766 / IAM 14443 / JCM 21226 / LMG 7866 / NBRC 102419 / NCTC 12128 / CDC 0568-73).